Here is a 361-residue protein sequence, read N- to C-terminus: tRNA/tmRNA (uracil-C(5))-methyltransferase (361 aa).

Residues Gln-185, Tyr-213, Asn-218, Glu-234, and Asp-294 each coordinate S-adenosyl-L-methionine. The active-site Nucleophile is the Cys-319. The active-site Proton acceptor is Glu-353.

This sequence belongs to the class I-like SAM-binding methyltransferase superfamily. RNA M5U methyltransferase family. TrmA subfamily.

The catalysed reaction is uridine(54) in tRNA + S-adenosyl-L-methionine = 5-methyluridine(54) in tRNA + S-adenosyl-L-homocysteine + H(+). The enzyme catalyses uridine(341) in tmRNA + S-adenosyl-L-methionine = 5-methyluridine(341) in tmRNA + S-adenosyl-L-homocysteine + H(+). Its function is as follows. Dual-specificity methyltransferase that catalyzes the formation of 5-methyluridine at position 54 (m5U54) in all tRNAs, and that of position 341 (m5U341) in tmRNA (transfer-mRNA). The polypeptide is tRNA/tmRNA (uracil-C(5))-methyltransferase (Pseudomonas putida (strain GB-1)).